A 223-amino-acid chain; its full sequence is Superoxide dismutase [Mn], mitochondrial (223 aa).

The N-terminal 24 residues, 1–24, are a transit peptide targeting the mitochondrion; it reads MNLIIGVAGRLLVGKNYCLNTQRL. Mn(2+)-binding residues include histidine 50, histidine 98, aspartate 184, and histidine 188.

It belongs to the iron/manganese superoxide dismutase family. Homotetramer. Mn(2+) serves as cofactor.

It localises to the mitochondrion matrix. It catalyses the reaction 2 superoxide + 2 H(+) = H2O2 + O2. Destroys superoxide anion radicals which are normally produced within the cells and which are toxic to biological systems. This is Superoxide dismutase [Mn], mitochondrial (sod-2) from Onchocerca volvulus.